The chain runs to 486 residues: uncharacterized protein (486 aa).

9 LRR repeats span residues 18-39 (NLKK…KKLV), 43-59 (ELHI…NIPE), 60-81 (NIKS…TKLK), 82-103 (NITY…ILPH), 104-125 (SIEF…NNLV), 126-147 (NLKK…FPIS), 148-168 (IVEL…EKLI), 169-190 (NLKK…IKFP), and 198-219 (DYQS…IEYE).

This is an uncharacterized protein from Amsacta moorei entomopoxvirus (AmEPV).